A 616-amino-acid polypeptide reads, in one-letter code: MLVRLTKLSCPAYQWFHALKIKKCLPLCAPRCSSTSAVPQITTHYTIHPREKDKRWEGVNMERFAEEADVVIVGAGPAGLSAAIRLKQLAAEQEKDIRVCLVEKAAQIGAHTLSGACLDPAAFKELFPDWKEKGAPLNTPVTEDRFAILTEKHRIPVPILPGLPMNNHGNYIVRLGHLVSWMGEQAEALGVEVYPGYAAAEVLYHEDGSVKGIATNDVGIQKDGAPKTTFERGLELHAKVTIFAEGCHGHLAKQFYKKFDLRASCDAQTYGIGLKELWVIDEKKWKPGRVDHTVGWPLDRHTYGGSFLYHLNEGEPLVAVGFVVGLDYQNPYLSPFREFQRWKHHPSIRPTLEGGKRIAYGARALNEGGLQSIPKLTFPGGLLIGCSPGFMNVPKIKGTHTAMKSGSLAAEAIFKQLTSENLQSKTAGLHVTEYEDNLKQSWVWKELHAVRNIRPSCHGILGVYGGMIYTGIFYWILRGMEPWTLKHKGSDSEQLKPAKDCTPIEYPKPDGQISFDLLSSVALSGTNHEHDQPAHLTLKDDSIPVNRNLSIYDGPEQRFCPAGVYEFVPLEQGDGFRLQINAQNCVHCKTCDIKDPSQNINWVVPEGGGGPAYNGM.

Residues 1–32 (MLVRLTKLSCPAYQWFHALKIKKCLPLCAPRC) constitute a mitochondrion transit peptide. 70–84 (VVIVGAGPAGLSAAI) is a binding site for FAD. Lys-95 carries the N6-acetyllysine modification. The stretch at 108–129 (IGAHTLSGACLDPAAFKELFPD) is an intramembrane region. N6-acetyllysine occurs at positions 131 and 222. Gly-304 and Gly-305 together coordinate a ubiquinone. Residues Lys-356 and Lys-415 each carry the N6-acetyllysine modification. Residues 427-446 (AGLHVTEYEDNLKQSWVWKE) lie within the membrane without spanning it. At Ser-550 the chain carries Phosphoserine. Positions 560, 585, 588, and 591 each coordinate [4Fe-4S] cluster. The 4Fe-4S ferredoxin-type domain maps to 576–605 (FRLQINAQNCVHCKTCDIKDPSQNINWVVP).

It belongs to the ETF-QO/FixC family. In terms of assembly, monomer. [4Fe-4S] cluster is required as a cofactor. FAD serves as cofactor.

Its subcellular location is the mitochondrion inner membrane. It catalyses the reaction a ubiquinone + reduced [electron-transfer flavoprotein] = a ubiquinol + oxidized [electron-transfer flavoprotein] + H(+). Its function is as follows. Accepts electrons from ETF and reduces ubiquinone. In Rattus norvegicus (Rat), this protein is Electron transfer flavoprotein-ubiquinone oxidoreductase, mitochondrial (Etfdh).